The sequence spans 294 residues: NAD kinase (294 aa).

Residue aspartate 73 is the Proton acceptor of the active site. NAD(+)-binding positions include 73–74 (DG), 147–148 (ND), arginine 175, aspartate 177, and 188–193 (TAYALS).

This sequence belongs to the NAD kinase family. Requires a divalent metal cation as cofactor.

The protein localises to the cytoplasm. It catalyses the reaction NAD(+) + ATP = ADP + NADP(+) + H(+). Functionally, involved in the regulation of the intracellular balance of NAD and NADP, and is a key enzyme in the biosynthesis of NADP. Catalyzes specifically the phosphorylation on 2'-hydroxyl of the adenosine moiety of NAD to yield NADP. This Nitrosospira multiformis (strain ATCC 25196 / NCIMB 11849 / C 71) protein is NAD kinase.